Consider the following 262-residue polypeptide: Shikimate dehydrogenase (NADP(+)) (262 aa).

Shikimate-binding positions include 15-17 and Thr-62; that span reads SRS. Lys-66 acts as the Proton acceptor in catalysis. An NADP(+)-binding site is contributed by Glu-78. Residues Asn-87 and Asp-102 each contribute to the shikimate site. NADP(+) contacts are provided by residues 126–130, 150–155, and Met-214; these read GAGGA and NRTLAR. Tyr-216 contributes to the shikimate binding site. Gly-236 contributes to the NADP(+) binding site.

This sequence belongs to the shikimate dehydrogenase family. Homodimer.

The enzyme catalyses shikimate + NADP(+) = 3-dehydroshikimate + NADPH + H(+). The protein operates within metabolic intermediate biosynthesis; chorismate biosynthesis; chorismate from D-erythrose 4-phosphate and phosphoenolpyruvate: step 4/7. Involved in the biosynthesis of the chorismate, which leads to the biosynthesis of aromatic amino acids. Catalyzes the reversible NADPH linked reduction of 3-dehydroshikimate (DHSA) to yield shikimate (SA). The protein is Shikimate dehydrogenase (NADP(+)) of Acinetobacter baumannii (strain AB0057).